We begin with the raw amino-acid sequence, 1935 residues long: Rho GTPase-activating protein 21 (1935 aa).

The disordered stretch occupies residues 1–46 (MATRRATVPEQQQQQPSSPGSEISKNKDGQEQSEMVSPTEEEGFCW). Residues 78 to 163 (HTTVKDEENG…TLELSVMPKD (86 aa)) form the PDZ domain. Disordered regions lie at residues 212–237 (VEVPPSGTSLTKQQSSRPVRTATTQP), 339–373 (PPSYGGHSESMFSTRPSQAEESPSPTNHYASPGSH), 413–456 (QNTT…QERL), 673–718 (TSTS…DSNS), and 862–919 (NSKT…DVFS). Polar residues-rich tracts occupy residues 217 to 237 (SGTSLTKQQSSRPVRTATTQP), 348 to 373 (SMFSTRPSQAEESPSPTNHYASPGSH), and 413 to 429 (QNTTDYDQMLPNRSSGQ). Low complexity-rich tracts occupy residues 441–451 (PQSVQMRQRSV) and 673–685 (TSTSASSSSPAHT). Polar residues predominate over residues 708–718 (SPEANAGDSNS). Positions 863–884 (SKTERSKSCDEGLDDYKDEGKL) are enriched in basic and acidic residues. The PH domain occupies 920–1033 (DSNKEGFLYF…WIKAIQENGN (114 aa)). The interval 1056–1126 (TMMSSSSNKS…KGSWRRIMKK (71 aa)) is disordered. Over residues 1059–1072 (SSSSNKSEQSPKPS) the composition is skewed to low complexity. The span at 1097-1119 (PKQESERRLFSKDDISPPKDKGS) shows a compositional bias: basic and acidic residues. The Rho-GAP domain maps to 1140–1332 (VRLDDCPPAH…TLIQQHDWFF (193 aa)). Disordered stretches follow at residues 1341–1393 (ITAV…GSGK), 1411–1431 (RKRKKQRDKPQPSSSEDELDN), 1488–1510 (SEATSPCPPKLSEPPIVNHRLPP), 1525–1548 (SMSDSGTMLSTSSQASAQRSKPKV), 1637–1665 (HRSKVEEPTRNVQVNSEGSPSCTEGSITP), 1688–1733 (SIRQ…EPEE), and 1838–1925 (SELS…SGTQ). Over residues 1345–1355 (QEESTVESQPV) the composition is skewed to polar residues. A compositionally biased stretch (low complexity) spans 1376–1393 (SDSASDSAKSKGSWGSGK). Polar residues-rich tracts occupy residues 1525-1543 (SMSDSGTMLSTSSQASAQR) and 1646-1662 (RNVQVNSEGSPSCTEGS). Positions 1691–1705 (QKTDSECSAESKNEE) are enriched in basic and acidic residues. 2 stretches are compositionally biased toward polar residues: residues 1872-1889 (QVSTAIVTAGSESPSQGT) and 1898-1911 (NGDSFQSKNKNNFS).

The protein localises to the golgi apparatus membrane. Its subcellular location is the cell junction. It is found in the cytoplasmic vesicle membrane. The protein resides in the cytoplasm. It localises to the cytoskeleton. GTPase-activating protein (GAP) for rhoa and cdc42. This Xenopus tropicalis (Western clawed frog) protein is Rho GTPase-activating protein 21 (arhgap21).